Here is a 166-residue protein sequence, read N- to C-terminus: NAD(P)H-quinone oxidoreductase subunit I, chloroplastic (166 aa).

4Fe-4S ferredoxin-type domains are found at residues 55–84 (GRIH…VDWK) and 95–124 (LNYS…MTEE). [4Fe-4S] cluster contacts are provided by C64, C67, C70, C74, C104, C107, C110, and C114.

The protein belongs to the complex I 23 kDa subunit family. NDH is composed of at least 16 different subunits, 5 of which are encoded in the nucleus. Requires [4Fe-4S] cluster as cofactor.

The protein localises to the plastid. Its subcellular location is the chloroplast thylakoid membrane. It catalyses the reaction a plastoquinone + NADH + (n+1) H(+)(in) = a plastoquinol + NAD(+) + n H(+)(out). It carries out the reaction a plastoquinone + NADPH + (n+1) H(+)(in) = a plastoquinol + NADP(+) + n H(+)(out). Its function is as follows. NDH shuttles electrons from NAD(P)H:plastoquinone, via FMN and iron-sulfur (Fe-S) centers, to quinones in the photosynthetic chain and possibly in a chloroplast respiratory chain. The immediate electron acceptor for the enzyme in this species is believed to be plastoquinone. Couples the redox reaction to proton translocation, and thus conserves the redox energy in a proton gradient. In Perymeniopsis ovalifolia, this protein is NAD(P)H-quinone oxidoreductase subunit I, chloroplastic.